Reading from the N-terminus, the 306-residue chain is Deoxyribokinase (306 aa).

Residues 10 to 12 (MVD), 38 to 42 (GKGAN), and glutamate 139 contribute to the substrate site. Residues asparagine 184 and 220-225 (TMGEKG) contribute to the ATP site. K(+)-binding residues include aspartate 246 and serine 248. 251–252 (GD) is an ATP binding site. A substrate-binding site is contributed by aspartate 252. Aspartate 252 functions as the Proton acceptor in the catalytic mechanism. K(+) contacts are provided by serine 282, glycine 285, glycine 287, and serine 291.

This sequence belongs to the carbohydrate kinase PfkB family. Deoxyribokinase subfamily. Homodimer. Mg(2+) is required as a cofactor.

The protein localises to the cytoplasm. The enzyme catalyses 2-deoxy-D-ribose + ATP = 2-deoxy-D-ribose 5-phosphate + ADP + H(+). Catalyzes the ATP-dependent phosphorylation of 2-deoxy-D-ribose to 2-deoxy-D-ribose 5-phosphate (dRib-5P), allowing the use of deoxyribose as the sole carbon source. Can also use D-ribose, with much lower efficiency. The chain is Deoxyribokinase from Salmonella typhi.